The primary structure comprises 372 residues: MSGKTIYLGVIGVGGVGAHFLTQLSRLPNAPSLVLLARSSQTVTSPAPSYSPAIAPSDWQSAFSTSSSASYTQSGAWNPDQIAAYLSKAPGRAVLVDNTSDPTVADAYPLFLSKGISIVTPNKKAFSSSFNLWKNIFNTAASTSSLVYHESTVGAGLPVVSTLRDLVATGDRITRIEGVFSGTLSFLFNSFAPATAQSGVSAQKWSQVVAQAKDLGYTEPDPRDDLNGMDVARKVTILARIAGLEVQSPESFPVESLIPAKLRGLTSAAEFMQRLPDFDDQMEAIKNQAEAEGKIVRYVGRVDVEGKVVKVGLQQFDKDSAIAGLKGSDNIISFYTERYGKNPLIIQGAGAGGAVTAMGVTADLIKVLERLH.

NAD(+) contacts are provided by V13, G15, V16, and T99. NADP(+) contacts are provided by V16 and T99. Residues V16, T99, S100, and K123 each contribute to the NADPH site. An NADP(+)-binding site is contributed by K123. Na(+) is bound by residues E150, V153, A155, and L157. 2 residues coordinate NADP(+): G216 and E219. The L-homoserine site is built by E219 and D230. Residue K234 is the Proton donor of the active site. Residue G352 participates in NAD(+) binding. An NADP(+)-binding site is contributed by G352. G352 contacts NADPH.

It belongs to the homoserine dehydrogenase family. Homodimer. A metal cation serves as cofactor.

The catalysed reaction is L-homoserine + NADP(+) = L-aspartate 4-semialdehyde + NADPH + H(+). It carries out the reaction L-homoserine + NAD(+) = L-aspartate 4-semialdehyde + NADH + H(+). The protein operates within amino-acid biosynthesis; L-methionine biosynthesis via de novo pathway; L-homoserine from L-aspartate: step 3/3. Its pathway is amino-acid biosynthesis; L-threonine biosynthesis; L-threonine from L-aspartate: step 3/5. In terms of biological role, catalyzes the conversion of L-aspartate-beta-semialdehyde (L-Asa) to L-homoserine (L-Hse), the third step in the biosynthesis of amino acids that derive from aspartate (the aspartate family of amino acids), including methioinine and threonine, the latter of which is a precursor to isoleucine; production of homoserine leads to a branch-point in the pathway as it can either be O-phosphorylated for processing to threonine, or O-acylated for processing to methionine. The sequence is that of Homoserine dehydrogenase from Paracoccidioides brasiliensis (strain Pb18).